Reading from the N-terminus, the 482-residue chain is [Fructose-bisphosphate aldolase]-lysine N-methyltransferase, chloroplastic (482 aa).

The N-terminal 57 residues, 1 to 57, are a transit peptide targeting the chloroplast; sequence MSASVAVVSGFLRIPSIQKSQNPSFLFSRPKKSLVRPISASSSELPENVRNFWKWLR. In terms of domain architecture, SET spans 59–282; sequence QGVVSGKSVA…AGEQVYIQYD (224 aa). Residues 75-77 and R217 each bind S-adenosyl-L-methionine; that span reads EGL. Positions 217, 221, and 234 each coordinate substrate. An S-adenosyl-L-methionine-binding site is contributed by 237 to 238; sequence NH. Positions 249, 281, and 294 each coordinate substrate.

The protein belongs to the class V-like SAM-binding methyltransferase superfamily. Plant protein-lysine LSMT methyltransferase family.

It localises to the plastid. The protein localises to the chloroplast stroma. The catalysed reaction is [fructose-bisphosphate aldolase]-L-lysine + 3 S-adenosyl-L-methionine = [fructose-bisphosphate aldolase]-N(6),N(6),N(6)-trimethyl-L-lysine + 3 S-adenosyl-L-homocysteine + 3 H(+). Protein-lysine methyltransferase methylating chloroplastic fructose 1,6-bisphosphate aldolases. Can also use with low efficiency gamma-tocopherol methyltransferase as substrate, but not a cytosolic aldolase. Able to interact with unmethylated Rubisco, but unlike in pea, the complex is catalytically unproductive. The sequence is that of [Fructose-bisphosphate aldolase]-lysine N-methyltransferase, chloroplastic (LSMT-L) from Arabidopsis thaliana (Mouse-ear cress).